A 272-amino-acid chain; its full sequence is uncharacterized protein (272 aa).

NAD(+) contacts are provided by residues 12–34 (FITG…DGAN), 39–40 (DI), 77–78 (DV), and asparagine 104. A substrate-binding site is contributed by serine 153. The Proton acceptor role is filled by tyrosine 170. NAD(+) is bound by residues lysine 174 and 203-205 (VDT).

This sequence belongs to the short-chain dehydrogenases/reductases (SDR) family.

This is an uncharacterized protein from Mycobacterium tuberculosis (strain CDC 1551 / Oshkosh).